We begin with the raw amino-acid sequence, 294 residues long: Secreted frizzled-related protein 2 (294 aa).

Residues 1–24 (MPRGPGSLLLLVLASHCCLGSARG) form the signal peptide. Residues 34 to 154 (YKRSNCKPIP…PQDNDLCIPL (121 aa)) form the FZ domain. Cystine bridges form between cysteine 39–cysteine 102, cysteine 49–cysteine 95, cysteine 86–cysteine 124, cysteine 113–cysteine 151, cysteine 117–cysteine 141, cysteine 171–cysteine 244, cysteine 174–cysteine 246, and cysteine 189–cysteine 294. In terms of domain architecture, NTR spans 171–294 (CEACKNKNED…ISRSIRKLQC (124 aa)).

Belongs to the secreted frizzled-related protein (sFRP) family.

It is found in the secreted. Functionally, soluble frizzled-related proteins (sFRPS) function as modulators of Wnt signaling through direct interaction with Wnts. They have a role in regulating cell growth and differentiation in specific cell types. SFRP2 may be important for eye retinal development and for myogenesis. The protein is Secreted frizzled-related protein 2 (SFRP2) of Canis lupus familiaris (Dog).